The chain runs to 329 residues: Putative glucose-6-phosphate 1-epimerase (329 aa).

Over residues 1–13 the composition is skewed to low complexity; that stretch reads MAAPAPAGAAASP. Residues 1–20 are disordered; it reads MAAPAPAGAAASPSPKPQLP. Residues arginine 82, glutamine 100, and arginine 105 each contribute to the substrate site. Residue histidine 183 is part of the active site. Aspartate 228 contributes to the substrate binding site. The active site involves glutamate 287.

This sequence belongs to the glucose-6-phosphate 1-epimerase family.

It catalyses the reaction alpha-D-glucose 6-phosphate = beta-D-glucose 6-phosphate. In Cenchrus ciliaris (Buffelgrass), this protein is Putative glucose-6-phosphate 1-epimerase.